A 604-amino-acid polypeptide reads, in one-letter code: Prostaglandin G/H synthase 2 (604 aa).

The first 17 residues, 1 to 17 (MLARALLLCVALALGHA), serve as a signal peptide directing secretion. Residues 18–55 (ANPCCSNPCQNRGVCMSVGFDQYQCDCTRTGFYGENCS) enclose the EGF-like domain. Disulfide bonds link Cys21–Cys32, Cys22–Cys145, Cys26–Cys42, and Cys44–Cys54. The N-linked (GlcNAc...) asparagine glycan is linked to Asn53. Residue Arg106 participates in substrate binding. Asn130 carries an N-linked (GlcNAc...) asparagine glycan. His193 serves as the catalytic Proton acceptor. Position 341 (Tyr341) interacts with substrate. Tyr371 serves as the catalytic For cyclooxygenase activity. His374 is a heme b binding site. N-linked (GlcNAc...) asparagine glycosylation occurs at Asn396. At Cys526 the chain carries S-nitrosocysteine. The cysteines at positions 555 and 561 are disulfide-linked. An N-linked (GlcNAc...) asparagine glycan is attached at Asn580.

This sequence belongs to the prostaglandin G/H synthase family. In terms of assembly, homodimer. Requires heme b as cofactor. In terms of processing, S-nitrosylation by NOS2 (iNOS) activates enzyme activity. S-nitrosylation may take place on different Cys residues in addition to Cys-526.

The protein localises to the microsome membrane. It localises to the endoplasmic reticulum membrane. Its subcellular location is the nucleus inner membrane. It is found in the nucleus outer membrane. The enzyme catalyses (5Z,8Z,11Z,14Z)-eicosatetraenoate + AH2 + 2 O2 = prostaglandin H2 + A + H2O. It carries out the reaction (5Z,8Z,11Z,14Z)-eicosatetraenoate + 2 O2 = prostaglandin G2. It catalyses the reaction prostaglandin G2 + AH2 = prostaglandin H2 + A + H2O. The catalysed reaction is (5Z,8Z,11Z,14Z,17Z)-eicosapentaenoate + 2 O2 = prostaglandin G3. The enzyme catalyses prostaglandin G3 + AH2 = prostaglandin H3 + A + H2O. It carries out the reaction (8Z,11Z,14Z)-eicosatrienoate + 2 O2 = prostaglandin G1. It catalyses the reaction prostaglandin G1 + AH2 = prostaglandin H1 + A + H2O. The catalysed reaction is 2-(5Z,8Z,11Z,14Z)-eicosatetraenoyl-sn-glycero-3-phosphoethanolamine + 2 O2 = 2-(prostaglandin G2)-sn-glycero-3-phosphoethanolamine. The enzyme catalyses 2-(prostaglandin G2)-sn-glycero-3-phosphoethanolamine + AH2 = 2-(prostaglandin H2)-sn-glycero-3-phosphoethanolamine + A + H2O. It carries out the reaction 2-(5Z,8Z,11Z,14Z)-eicosatetraenoyl-sn-glycero-3-phosphocholine + 2 O2 = 2-(prostaglandin G2)-sn-glycero-3-phosphocholine. It catalyses the reaction 2-(prostaglandin G2)-sn-glycero-3-phosphocholine + AH2 = 2-(prostaglandin H2)-sn-glycero-3-phosphocholine + A + H2O. The catalysed reaction is (15S)-hydroperoxy-(5Z,8Z,11Z,13E)-eicosatetraenoate + AH2 = (15S)-hydroxy-(5Z,8Z,11Z,13E)-eicosatetraenoate + A + H2O. The enzyme catalyses 2-(5Z,8Z,11Z,14Z)-eicosatetraenoyl-sn-glycero-3-phosphocholine + AH2 + O2 = 2-[(15S)-hydroxy-(5Z,8Z,11Z,13E)-eicosatetraenoyl]-sn-glycero-3-phosphocholine + A + H2O. It carries out the reaction 2-(5Z,8Z,11Z,14Z)-eicosatetraenoyl-sn-glycero-3-phosphocholine + AH2 + O2 = 2-[(15R)-hydroxy-(5Z,8Z,11Z,13E)-eicosatetraenoyl]-sn-glycero-3-phosphocholine + A + H2O. It catalyses the reaction 2-(5Z,8Z,11Z,14Z)-eicosatetraenoyl-sn-glycero-3-phosphocholine + AH2 + O2 = 2-[(11R)-hydroxy-(5Z,8Z,12E,14Z)-eicosatetraenoyl]-sn-glycero-3-phosphocholine + A + H2O. The catalysed reaction is (9Z,12Z)-octadecadienoate + AH2 + O2 = 9-hydroxy-(10E,12Z)-octadecadienoate + A + H2O. The enzyme catalyses (9Z,12Z)-octadecadienoate + AH2 + O2 = 13-hydroxy-(9Z,11E)-octadecadienoate + A + H2O. It carries out the reaction (5Z,8Z,11Z,14Z)-eicosatetraenoate + AH2 + O2 = (15R)-hydroxy-(5Z,8Z,11Z,13E)-eicosatetraenoate + A + H2O. It catalyses the reaction (5Z,8Z,11Z,14Z)-eicosatetraenoate + AH2 + O2 = (11R)-hydroxy-(5Z,8Z,12E,14Z)-eicosatetraenoate + A + H2O. The catalysed reaction is (5Z,8Z,11Z,14Z,17Z)-eicosapentaenoate + AH2 + O2 = (11R)-hydroxy-(5Z,8Z,12E,14Z,17Z)-eicosapentaenoate + A + H2O. The enzyme catalyses (5Z,8Z,11Z,14Z,17Z)-eicosapentaenoate + AH2 + O2 = (18S)-hydroxy-(5Z,8Z,11Z,14Z,16E)-eicosapentaenoate + A + H2O. It carries out the reaction (5Z,8Z,11Z,14Z,17Z)-eicosapentaenoate + AH2 + O2 = (18R)-hydroxy-(5Z,8Z,11Z,14Z,16E)-eicosapentaenoate + A + H2O. It catalyses the reaction (5Z,8Z,11Z,14Z,17Z)-eicosapentaenoate + AH2 + O2 = (15R)-hydroxy-(5Z,8Z,11Z,13E,17Z)-eicosapentaenoate + A + H2O. The catalysed reaction is (5Z,8Z,11Z,14Z,17Z)-eicosapentaenoate + AH2 + O2 = (15S)-hydroxy-(5Z,8Z,11Z,13E,17Z)-eicosapentaenoate + A + H2O. The enzyme catalyses (7Z,10Z,13Z,16Z,19Z)-docosapentaenoate + AH2 + O2 = 13R-hydroxy-(7Z,10Z,14E,16Z,19Z)-docosapentaenoate + A + H2O. It carries out the reaction (4Z,7Z,10Z,13Z,16Z,19Z)-docosahexaenoate + AH2 + O2 = 13-hydroxy-(4Z,7Z,10Z,14E,16Z,19Z)-docosahexaenoate + A + H2O. It catalyses the reaction (5S)-hydroxy-(6E,8Z,11Z,14Z)-eicosatetraenoate + AH2 + O2 = (5S,15R)-dihydroxy-(6E,8Z,11Z,13E)-eicosatetraenoate + A + H2O. The catalysed reaction is (4Z,7Z,10Z,13Z,16Z,19Z)-docosahexaenoate + AH2 + O2 = 17R-hydroxy-(4Z,7Z,10Z,13Z,15E,19Z)-docosahexaenoate + A + H2O. The enzyme catalyses (5S)-hydroxy-(6E,8Z,11Z,14Z)-eicosatetraenoate + AH2 + O2 = (5S,15S)-dihydroxy-(6E,8Z,11Z,13E)-eicosatetraenoate + A + H2O. It carries out the reaction (5S)-hydroxy-(6E,8Z,11Z,14Z)-eicosatetraenoate + AH2 + O2 = (5S,11R)-dihydroxy-(6E,8Z,12E,14Z)-eicosatetraenoate + A + H2O. It catalyses the reaction 2-(5Z,8Z,11Z,14Z-eicosatetraenoyl)-glycerol + 2 O2 = 2-glyceryl-prostaglandin G2. The catalysed reaction is 2-glyceryl-prostaglandin G2 + AH2 = 2-glyceryl-prostaglandin H2 + A + H2O. The enzyme catalyses (5Z,8Z,11Z,14Z)-eicosatetraenoate + O2 = (15R)-hydroperoxy-(5Z,8Z,11Z,13E)-eicosatetraenoate. It carries out the reaction (5Z,8Z,11Z,14Z)-eicosatetraenoate + O2 = 11R-hydroperoxy-(5Z,8Z,12E,14Z)-eicosatetraenoate. It catalyses the reaction (9Z,12Z)-octadecadienoate + AH2 + O2 = (9R)-hydroxy-(10E,12Z)-octadecadienoate + A + H2O. The catalysed reaction is (9Z,12Z)-octadecadienoate + AH2 + O2 = (9S)-hydroxy-(10E,12Z)-octadecadienoate + A + H2O. The enzyme catalyses (9Z,12Z)-octadecadienoate + AH2 + O2 = (13S)-hydroxy-(9Z,11E)-octadecadienoate + A + H2O. It carries out the reaction (9Z,12Z)-octadecadienoate + AH2 + O2 = (13R)-hydroxy-(9Z,11E)-octadecadienoate + A + H2O. It participates in lipid metabolism; prostaglandin biosynthesis. Its function is as follows. Dual cyclooxygenase and peroxidase in the biosynthesis pathway of prostanoids, a class of C20 oxylipins mainly derived from arachidonate ((5Z,8Z,11Z,14Z)-eicosatetraenoate, AA, C20:4(n-6)), with a particular role in the inflammatory response. The cyclooxygenase activity oxygenates AA to the hydroperoxy endoperoxide prostaglandin G2 (PGG2), and the peroxidase activity reduces PGG2 to the hydroxy endoperoxide prostaglandin H2 (PGH2), the precursor of all 2-series prostaglandins and thromboxanes. This complex transformation is initiated by abstraction of hydrogen at carbon 13 (with S-stereochemistry), followed by insertion of molecular O2 to form the endoperoxide bridge between carbon 9 and 11 that defines prostaglandins. The insertion of a second molecule of O2 (bis-oxygenase activity) yields a hydroperoxy group in PGG2 that is then reduced to PGH2 by two electrons. Similarly catalyzes successive cyclooxygenation and peroxidation of dihomo-gamma-linoleate (DGLA, C20:3(n-6)) and eicosapentaenoate (EPA, C20:5(n-3)) to corresponding PGH1 and PGH3, the precursors of 1- and 3-series prostaglandins. In an alternative pathway of prostanoid biosynthesis, converts 2-arachidonoyl lysophopholipids to prostanoid lysophopholipids, which are then hydrolyzed by intracellular phospholipases to release free prostanoids. Metabolizes 2-arachidonoyl glycerol yielding the glyceryl ester of PGH2, a process that can contribute to pain response. Generates lipid mediators from n-3 and n-6 polyunsaturated fatty acids (PUFAs) via a lipoxygenase-type mechanism. Oxygenates PUFAs to hydroperoxy compounds and then reduces them to corresponding alcohols. Plays a role in the generation of resolution phase interaction products (resolvins) during both sterile and infectious inflammation. Metabolizes docosahexaenoate (DHA, C22:6(n-3)) to 17R-HDHA, a precursor of the D-series resolvins (RvDs). As a component of the biosynthetic pathway of E-series resolvins (RvEs), converts eicosapentaenoate (EPA, C20:5(n-3)) primarily to 18S-HEPE that is further metabolized by ALOX5 and LTA4H to generate 18S-RvE1 and 18S-RvE2. In vascular endothelial cells, converts docosapentaenoate (DPA, C22:5(n-3)) to 13R-HDPA, a precursor for 13-series resolvins (RvTs) shown to activate macrophage phagocytosis during bacterial infection. In activated leukocytes, contributes to oxygenation of hydroxyeicosatetraenoates (HETE) to diHETES (5,15-diHETE and 5,11-diHETE). Can also use linoleate (LA, (9Z,12Z)-octadecadienoate, C18:2(n-6)) as substrate and produce hydroxyoctadecadienoates (HODEs) in a regio- and stereospecific manner, being (9R)-HODE ((9R)-hydroxy-(10E,12Z)-octadecadienoate) and (13S)-HODE ((13S)-hydroxy-(9Z,11E)-octadecadienoate) its major products. During neuroinflammation, plays a role in neuronal secretion of specialized preresolving mediators (SPMs) 15R-lipoxin A4 that regulates phagocytic microglia. This Equus caballus (Horse) protein is Prostaglandin G/H synthase 2 (PTGS2).